Here is a 292-residue protein sequence, read N- to C-terminus: Transforming growth factor-beta receptor type 3-like protein (292 aa).

A signal peptide spans 1 to 16 (MLGTVLLLALLPGITT). In terms of domain architecture, ZP; truncated spans 17–170 (LPSGPPAPPF…APAPLTPPPP (154 aa)). Residues 17–244 (LPSGPPAPPF…PAPAALEPAP (228 aa)) lie on the Extracellular side of the membrane. The cysteines at positions 85 and 147 are disulfide-linked. Residues 160–236 (RAPAPLTPPP…AVRPEPPAPA (77 aa)) are disordered. 2 stretches are compositionally biased toward pro residues: residues 164–175 (PLTPPPPPPPSR) and 213–222 (PRPPPRPPKS). A helical transmembrane segment spans residues 245 to 265 (VVALVLAAFVLGAALAAGLGL). Topologically, residues 266 to 292 (VCAHSAPHAPGPPARASPSGPQPRRSQ) are cytoplasmic. Residues 273–292 (HAPGPPARASPSGPQPRRSQ) form a disordered region. Residues 281-292 (ASPSGPQPRRSQ) show a composition bias toward low complexity.

In terms of processing, glycosylated. As to expression, expressed in pituitary gland gonadotrope cells.

The protein localises to the cell membrane. Expressed in gonadotrope cells, acts as an inhibin B coreceptor and regulates follicle-stimulating hormone (FSH) levels and female fertility. The protein is Transforming growth factor-beta receptor type 3-like protein of Homo sapiens (Human).